A 267-amino-acid chain; its full sequence is Putative phosphatase bbp_030 (267 aa).

Residue D8 is the Nucleophile of the active site. D8 serves as a coordination point for Mg(2+). L9 is a phosphate binding site. D10 serves as a coordination point for Mg(2+). Phosphate is bound by residues 42 to 43 and K191; that span reads TG. Mg(2+) is bound at residue D214. N217 serves as a coordination point for phosphate.

This sequence belongs to the HAD-like hydrolase superfamily. Cof family. Requires Mg(2+) as cofactor.

This Buchnera aphidicola subsp. Baizongia pistaciae (strain Bp) protein is Putative phosphatase bbp_030.